Here is a 308-residue protein sequence, read N- to C-terminus: Probable manganese-dependent inorganic pyrophosphatase (308 aa).

Mn(2+)-binding residues include H9, D13, D15, D74, H96, and D148.

This sequence belongs to the PPase class C family. Requires Mn(2+) as cofactor.

It localises to the cytoplasm. It carries out the reaction diphosphate + H2O = 2 phosphate + H(+). In Oceanobacillus iheyensis (strain DSM 14371 / CIP 107618 / JCM 11309 / KCTC 3954 / HTE831), this protein is Probable manganese-dependent inorganic pyrophosphatase.